The chain runs to 52 residues: ATP synthase protein 8 (52 aa).

Residues 6–26 (PLLWLNLFLMFSATFVMFIVL) traverse the membrane as a helical segment.

The protein belongs to the ATPase protein 8 family. As to quaternary structure, F-type ATPases have 2 components, CF(1) - the catalytic core - and CF(0) - the membrane proton channel.

Its subcellular location is the mitochondrion membrane. Mitochondrial membrane ATP synthase (F(1)F(0) ATP synthase or Complex V) produces ATP from ADP in the presence of a proton gradient across the membrane which is generated by electron transport complexes of the respiratory chain. F-type ATPases consist of two structural domains, F(1) - containing the extramembraneous catalytic core and F(0) - containing the membrane proton channel, linked together by a central stalk and a peripheral stalk. During catalysis, ATP synthesis in the catalytic domain of F(1) is coupled via a rotary mechanism of the central stalk subunits to proton translocation. Part of the complex F(0) domain. Minor subunit located with subunit a in the membrane. The chain is ATP synthase protein 8 (MT-ATP8) from Penaeus monodon (Giant tiger prawn).